We begin with the raw amino-acid sequence, 463 residues long: Thiamine-repressible acid phosphatase SPBC21H7.03c (463 aa).

Positions 1–18 (MQLCIISLWFLAAFIVNA) are cleaved as a signal peptide. The Nucleophile role is filled by histidine 69. Residues asparagine 98, asparagine 104, asparagine 221, and asparagine 324 are each glycosylated (N-linked (GlcNAc...) asparagine). The Proton donor role is filled by aspartate 341. N-linked (GlcNAc...) asparagine glycans are attached at residues asparagine 439 and asparagine 458.

The protein belongs to the histidine acid phosphatase family.

It localises to the secreted. Its subcellular location is the cell wall. The catalysed reaction is a phosphate monoester + H2O = an alcohol + phosphate. In terms of biological role, may dephosphorylate thiamine phosphates. This Schizosaccharomyces pombe (strain 972 / ATCC 24843) (Fission yeast) protein is Thiamine-repressible acid phosphatase SPBC21H7.03c.